The sequence spans 69 residues: Putative defensin-like protein 312 (69 aa).

A signal peptide spans 1–19 (MSCFSFLVYFLLFIVTKMS). Cys-45 and Cys-57 are disulfide-bonded.

Belongs to the DEFL family.

It is found in the secreted. The protein is Putative defensin-like protein 312 of Arabidopsis thaliana (Mouse-ear cress).